Here is a 254-residue protein sequence, read N- to C-terminus: Methylthioribulose-1-phosphate dehydratase (254 aa).

Cysteine 110 contributes to the substrate binding site. The Zn(2+) site is built by histidine 127 and histidine 129. Catalysis depends on glutamate 156, which acts as the Proton donor/acceptor. Histidine 212 provides a ligand contact to Zn(2+).

The protein belongs to the aldolase class II family. MtnB subfamily. Zn(2+) is required as a cofactor.

The protein localises to the cytoplasm. It catalyses the reaction 5-(methylsulfanyl)-D-ribulose 1-phosphate = 5-methylsulfanyl-2,3-dioxopentyl phosphate + H2O. It participates in amino-acid biosynthesis; L-methionine biosynthesis via salvage pathway; L-methionine from S-methyl-5-thio-alpha-D-ribose 1-phosphate: step 2/6. Its function is as follows. Catalyzes the dehydration of methylthioribulose-1-phosphate (MTRu-1-P) into 2,3-diketo-5-methylthiopentyl-1-phosphate (DK-MTP-1-P). The sequence is that of Methylthioribulose-1-phosphate dehydratase from Talaromyces marneffei (strain ATCC 18224 / CBS 334.59 / QM 7333) (Penicillium marneffei).